The following is a 394-amino-acid chain: Elongation factor Tu (394 aa).

The 195-residue stretch at 10-204 (KPHVNIGTIG…AVDSYIPQPV (195 aa)) folds into the tr-type G domain. The segment at 19-26 (GHVDHGKT) is G1. 19–26 (GHVDHGKT) contacts GTP. Position 26 (Thr26) interacts with Mg(2+). Residues 60-64 (GITIS) are G2. Residues 81–84 (DCPG) are G3. Residues 81 to 85 (DCPGH) and 136 to 139 (NKVD) each bind GTP. A G4 region spans residues 136-139 (NKVD). Residues 174–176 (SAL) are G5.

It belongs to the TRAFAC class translation factor GTPase superfamily. Classic translation factor GTPase family. EF-Tu/EF-1A subfamily. Monomer.

The protein localises to the cytoplasm. It carries out the reaction GTP + H2O = GDP + phosphate + H(+). Its function is as follows. GTP hydrolase that promotes the GTP-dependent binding of aminoacyl-tRNA to the A-site of ribosomes during protein biosynthesis. This Rickettsia canadensis (strain McKiel) protein is Elongation factor Tu.